The following is a 703-amino-acid chain: MAKREYPLERTRNIGIMAHIDAGKTTTTERILYYTGKIHKIGETHDGASQMDFMEQEKERGITIQSAATTAVWHGFFDQFAKTPYRVNIIDTPGHVDFTIEVERALRVLDGAVAVLDGAAGVEPQTETVWRQATTYDVPRIVFVNKMDKLGADFAMSVESMHERLQVNAEAIQWPIGAEDEFEAVIDLITQEAYYPVDDLGEKWEPREIPAELKELAEEKRNTLIEAVADVDDDLMEKYLEGEDISVEELKAAIRRATLALQFYPVLAGSAYKDKGVQMMLDAVVDYLPGPLDVKPYVANDPKTGEEIDLIADDSKSFAALAFKIMTDPFVGRLTFMRVYTGTLQSGSYVQNTSSDTRERVGRLLQMHATSRTEIDEVFSGDIAAAIGLKNTTTGDSLTAVDHQLILESMEFPEPVIELAIEPKTKADQDKLSNAIQKLAEEDPSFRATTNPETGDTLIAGMGELQLDIMVDRMRREFNVEATVGAPQVAYREAFTQTVQARGYFKRQSGGKGQYGDVYIEFSPNEEGAGFEFEDAIVGGVVPREYIPSVEAGLKDALNAGPLAGFPLVDLKAKLYDGSYHDVDSSEAAFKIAASLALKEAAKTAGAVILEPIMAVDIVAPEDNLGDVMGHVSARRGMIEGQESRGPVLAVKAKVPLSEMFGYATTLRSATQGRGTFQMVFDHYEAVPKNIQEEIIKNSGKEA.

The tr-type G domain occupies 9 to 292 (ERTRNIGIMA…AVVDYLPGPL (284 aa)). Residues 18–25 (AHIDAGKT), 91–95 (DTPGH), and 145–148 (NKMD) contribute to the GTP site.

The protein belongs to the TRAFAC class translation factor GTPase superfamily. Classic translation factor GTPase family. EF-G/EF-2 subfamily.

The protein resides in the cytoplasm. Functionally, catalyzes the GTP-dependent ribosomal translocation step during translation elongation. During this step, the ribosome changes from the pre-translocational (PRE) to the post-translocational (POST) state as the newly formed A-site-bound peptidyl-tRNA and P-site-bound deacylated tRNA move to the P and E sites, respectively. Catalyzes the coordinated movement of the two tRNA molecules, the mRNA and conformational changes in the ribosome. This chain is Elongation factor G, found in Leuconostoc citreum (strain KM20).